The following is a 124-amino-acid chain: Large ribosomal subunit protein uL14 (124 aa).

This sequence belongs to the universal ribosomal protein uL14 family. Part of the 50S ribosomal subunit. Forms a cluster with proteins L3 and L19. In the 70S ribosome, L14 and L19 interact and together make contacts with the 16S rRNA in bridges B5 and B8.

In terms of biological role, binds to 23S rRNA. Forms part of two intersubunit bridges in the 70S ribosome. This Clostridium novyi (strain NT) protein is Large ribosomal subunit protein uL14.